We begin with the raw amino-acid sequence, 67 residues long: MAKKEVAKKTVTVEQIGSPIRRPAVQRQTLVGLGLNKMHRVRTLEDTPAVRGMIRAVQHLVRVVDEK.

It belongs to the universal ribosomal protein uL30 family. In terms of assembly, part of the 50S ribosomal subunit.

This Sinorhizobium medicae (strain WSM419) (Ensifer medicae) protein is Large ribosomal subunit protein uL30.